We begin with the raw amino-acid sequence, 395 residues long: Acetylornithine aminotransferase (395 aa).

Pyridoxal 5'-phosphate-binding positions include 117 to 118 and F144; that span reads GA. A N(2)-acetyl-L-ornithine-binding site is contributed by R147. Residue 230-233 coordinates pyridoxal 5'-phosphate; sequence DEVQ. K259 carries the post-translational modification N6-(pyridoxal phosphate)lysine. S285 provides a ligand contact to N(2)-acetyl-L-ornithine. Position 286 (T286) interacts with pyridoxal 5'-phosphate.

It belongs to the class-III pyridoxal-phosphate-dependent aminotransferase family. ArgD subfamily. In terms of assembly, homodimer. Pyridoxal 5'-phosphate serves as cofactor.

The protein localises to the cytoplasm. It carries out the reaction N(2)-acetyl-L-ornithine + 2-oxoglutarate = N-acetyl-L-glutamate 5-semialdehyde + L-glutamate. It participates in amino-acid biosynthesis; L-arginine biosynthesis; N(2)-acetyl-L-ornithine from L-glutamate: step 4/4. The protein is Acetylornithine aminotransferase of Methanosarcina mazei (strain ATCC BAA-159 / DSM 3647 / Goe1 / Go1 / JCM 11833 / OCM 88) (Methanosarcina frisia).